We begin with the raw amino-acid sequence, 1070 residues long: Phosphatidylinositol 4,5-bisphosphate 3-kinase catalytic subunit beta isoform (1070 aa).

A PI3K-ABD domain is found at Ser-26–Ser-115. The 92-residue stretch at Gly-194–Glu-285 folds into the PI3K-RBD domain. Ser-324 carries the phosphoserine modification. The 170-residue stretch at Trp-327–Pro-496 folds into the C2 PI3K-type domain. The Nuclear localization signal motif lies at Lys-410 to Lys-418. In terms of domain architecture, PIK helical spans Ala-524–Gly-701. The region spanning Tyr-772–Trp-1053 is the PI3K/PI4K catalytic domain. The tract at residues Tyr-778–Lys-784 is G-loop. Residues Gly-916 to Asn-924 form a catalytic loop region. Residues His-935–Thr-961 form an activation loop region. The residue at position 1070 (Ser-1070) is a Phosphoserine; by autocatalysis.

Belongs to the PI3/PI4-kinase family. In terms of assembly, heterodimer of a catalytic subunit PIK3CB and a p85 regulatory subunit (PIK3R1, PIK3R2 or PIK3R3). Interaction with PIK3R2 is required for nuclear localization and nuclear export. Part of a complex with PIK3R1 and PTEN. Binding to PTEN may antagonize the lipid kinase activity under normal growth conditions. Part of a complex involved in autophagosome formation composed of PIK3C3 and PIK3R4. Interacts with BECN1, ATG14 and RAB5A. In terms of processing, autophosphorylation at Ser-1070 negatively regulates the phosphatidylinositol-4,5-bisphosphate 3-kinase activity. Expressed ubiquitously.

The protein resides in the cytoplasm. It localises to the nucleus. The catalysed reaction is a 1,2-diacyl-sn-glycero-3-phospho-(1D-myo-inositol-4,5-bisphosphate) + ATP = a 1,2-diacyl-sn-glycero-3-phospho-(1D-myo-inositol-3,4,5-trisphosphate) + ADP + H(+). It catalyses the reaction 1-octadecanoyl-2-(5Z,8Z,11Z,14Z)-eicosatetraenoyl-sn-glycero-3-phospho-1D-myo-inositol 4,5-bisphosphate + ATP = 1-octadecanoyl-2-(5Z,8Z,11Z,14Z-eicosatetraenoyl)-sn-glycero-3-phospho-(1D-myo-inositol 3,4,5-triphosphate) + ADP + H(+). It carries out the reaction L-seryl-[protein] + ATP = O-phospho-L-seryl-[protein] + ADP + H(+). It functions in the pathway phospholipid metabolism; phosphatidylinositol phosphate biosynthesis. Its function is as follows. Phosphoinositide-3-kinase (PI3K) phosphorylates phosphatidylinositol derivatives at position 3 of the inositol ring to produce 3-phosphoinositides. Uses ATP and PtdIns(4,5)P2 (phosphatidylinositol 4,5-bisphosphate) to generate phosphatidylinositol 3,4,5-trisphosphate (PIP3). PIP3 plays a key role by recruiting PH domain-containing proteins to the membrane, including AKT1 and PDPK1, activating signaling cascades involved in cell growth, survival, proliferation, motility and morphology. Involved in the activation of AKT1 upon stimulation by G-protein coupled receptors (GPCRs) ligands such as CXCL12, sphingosine 1-phosphate, and lysophosphatidic acid. May also act downstream receptor tyrosine kinases. Required in different signaling pathways for stable platelet adhesion and aggregation. Plays a role in platelet activation signaling triggered by GPCRs, alpha-IIb/beta-3 integrins (ITGA2B/ ITGB3) and ITAM (immunoreceptor tyrosine-based activation motif)-bearing receptors such as GP6. Regulates the strength of adhesion of ITGA2B/ ITGB3 activated receptors necessary for the cellular transmission of contractile forces. Required for platelet aggregation induced by F2 (thrombin) and thromboxane A2 (TXA2). Has a role in cell survival. May have a role in cell migration. Involved in the early stage of autophagosome formation. Modulates the intracellular level of PtdIns3P (phosphatidylinositol 3-phosphate) and activates PIK3C3 kinase activity. May act as a scaffold, independently of its lipid kinase activity to positively regulate autophagy. May have a role in insulin signaling as scaffolding protein in which the lipid kinase activity is not required. May have a kinase-independent function in regulating cell proliferation and in clathrin-mediated endocytosis. Mediator of oncogenic signal in cell lines lacking PTEN. The lipid kinase activity is necessary for its role in oncogenic transformation. Required for the growth of ERBB2 and RAS driven tumors. Also has a protein kinase activity showing autophosphorylation. In Homo sapiens (Human), this protein is Phosphatidylinositol 4,5-bisphosphate 3-kinase catalytic subunit beta isoform (PIK3CB).